The primary structure comprises 283 residues: Formamidopyrimidine-DNA glycosylase (283 aa).

The active-site Schiff-base intermediate with DNA is Pro-2. Glu-3 acts as the Proton donor in catalysis. The active-site Proton donor; for beta-elimination activity is Lys-60. Residues His-95, Arg-114, and Arg-159 each contribute to the DNA site. The FPG-type zinc finger occupies 244–278; the sequence is WVYGRHNQPCRVCGTPIERIKLGGRSSHFCPQCQP. Catalysis depends on Arg-268, which acts as the Proton donor; for delta-elimination activity.

Belongs to the FPG family. As to quaternary structure, monomer. The cofactor is Zn(2+).

The enzyme catalyses Hydrolysis of DNA containing ring-opened 7-methylguanine residues, releasing 2,6-diamino-4-hydroxy-5-(N-methyl)formamidopyrimidine.. It carries out the reaction 2'-deoxyribonucleotide-(2'-deoxyribose 5'-phosphate)-2'-deoxyribonucleotide-DNA = a 3'-end 2'-deoxyribonucleotide-(2,3-dehydro-2,3-deoxyribose 5'-phosphate)-DNA + a 5'-end 5'-phospho-2'-deoxyribonucleoside-DNA + H(+). Its function is as follows. Involved in base excision repair of DNA damaged by oxidation or by mutagenic agents. Acts as a DNA glycosylase that recognizes and removes damaged bases. Has a preference for oxidized purines, such as 7,8-dihydro-8-oxoguanine (8-oxoG). Has AP (apurinic/apyrimidinic) lyase activity and introduces nicks in the DNA strand. Cleaves the DNA backbone by beta-delta elimination to generate a single-strand break at the site of the removed base with both 3'- and 5'-phosphates. The chain is Formamidopyrimidine-DNA glycosylase from Crocosphaera subtropica (strain ATCC 51142 / BH68) (Cyanothece sp. (strain ATCC 51142)).